Consider the following 187-residue polypeptide: Phosphatidylethanolamine-binding protein 1 (187 aa).

Phosphoserine is present on residues S6 and S13. T42 bears the Phosphothreonine mark. A phosphoserine mark is found at S52, S54, S98, and S153. Positions 93-134 (KGNDISSGTVLSDYVGSGPPKGTGLHRYVWLVYEQDRPLKCD) are interaction with RAF1.

It belongs to the phosphatidylethanolamine-binding protein family. Has a tendency to form dimers by disulfide cross-linking. Interacts with RAF1 and this interaction is enhanced if RAF1 is phosphorylated on residues 'Ser-338', 'Ser-339', 'Tyr-340' and 'Tyr-341'. Interacts with ALOX15; in response to IL13/interleukin-13, prevents the interaction of PEBP1 with RAF1 to activate the ERK signaling cascade.

The protein localises to the cytoplasm. Functionally, binds ATP, opioids and phosphatidylethanolamine. Has lower affinity for phosphatidylinositol and phosphatidylcholine. Serine protease inhibitor which inhibits thrombin, neuropsin and chymotrypsin but not trypsin, tissue type plasminogen activator and elastase. Inhibits the kinase activity of RAF1 by inhibiting its activation and by dissociating the RAF1/MEK complex and acting as a competitive inhibitor of MEK phosphorylation. Its function is as follows. HCNP may be involved in the function of the presynaptic cholinergic neurons of the central nervous system. HCNP increases the production of choline acetyltransferase but not acetylcholinesterase. Seems to be mediated by a specific receptor. This chain is Phosphatidylethanolamine-binding protein 1 (PEBP1), found in Pongo abelii (Sumatran orangutan).